We begin with the raw amino-acid sequence, 183 residues long: Adenine phosphoribosyltransferase (183 aa).

The protein belongs to the purine/pyrimidine phosphoribosyltransferase family. Homodimer.

It is found in the cytoplasm. It carries out the reaction AMP + diphosphate = 5-phospho-alpha-D-ribose 1-diphosphate + adenine. Its pathway is purine metabolism; AMP biosynthesis via salvage pathway; AMP from adenine: step 1/1. Functionally, catalyzes a salvage reaction resulting in the formation of AMP, that is energically less costly than de novo synthesis. The protein is Adenine phosphoribosyltransferase of Sodalis glossinidius (strain morsitans).